We begin with the raw amino-acid sequence, 244 residues long: NAD(P)H-quinone oxidoreductase subunit K (244 aa).

4 residues coordinate [4Fe-4S] cluster: cysteine 60, cysteine 61, cysteine 125, and cysteine 156.

The protein belongs to the complex I 20 kDa subunit family. In terms of assembly, NDH-1 can be composed of about 15 different subunits; different subcomplexes with different compositions have been identified which probably have different functions. Requires [4Fe-4S] cluster as cofactor.

It is found in the cellular thylakoid membrane. It catalyses the reaction a plastoquinone + NADH + (n+1) H(+)(in) = a plastoquinol + NAD(+) + n H(+)(out). The enzyme catalyses a plastoquinone + NADPH + (n+1) H(+)(in) = a plastoquinol + NADP(+) + n H(+)(out). In terms of biological role, NDH-1 shuttles electrons from an unknown electron donor, via FMN and iron-sulfur (Fe-S) centers, to quinones in the respiratory and/or the photosynthetic chain. The immediate electron acceptor for the enzyme in this species is believed to be plastoquinone. Couples the redox reaction to proton translocation, and thus conserves the redox energy in a proton gradient. Cyanobacterial NDH-1 also plays a role in inorganic carbon-concentration. This chain is NAD(P)H-quinone oxidoreductase subunit K, found in Prochlorococcus marinus (strain AS9601).